The chain runs to 251 residues: Hydroxyacylglutathione hydrolase (251 aa).

Residues His53, His55, Asp57, His58, His110, Asp127, and His165 each contribute to the Zn(2+) site.

The protein belongs to the metallo-beta-lactamase superfamily. Glyoxalase II family. As to quaternary structure, monomer. Zn(2+) is required as a cofactor.

It carries out the reaction an S-(2-hydroxyacyl)glutathione + H2O = a 2-hydroxy carboxylate + glutathione + H(+). It functions in the pathway secondary metabolite metabolism; methylglyoxal degradation; (R)-lactate from methylglyoxal: step 2/2. Functionally, thiolesterase that catalyzes the hydrolysis of S-D-lactoyl-glutathione to form glutathione and D-lactic acid. This chain is Hydroxyacylglutathione hydrolase, found in Escherichia coli (strain 55989 / EAEC).